The following is an 834-amino-acid chain: Leucine--tRNA ligase (834 aa).

The 'HIGH' region signature appears at 42–52 (PYPSGKLHMGH). The short motif at 619–623 (KMSKS) is the 'KMSKS' region element. K622 is an ATP binding site.

The protein belongs to the class-I aminoacyl-tRNA synthetase family.

The protein resides in the cytoplasm. The catalysed reaction is tRNA(Leu) + L-leucine + ATP = L-leucyl-tRNA(Leu) + AMP + diphosphate. The protein is Leucine--tRNA ligase of Actinobacillus pleuropneumoniae serotype 7 (strain AP76).